The following is a 430-amino-acid chain: Enolase (430 aa).

Gln-165 contributes to the (2R)-2-phosphoglycerate binding site. Glu-207 functions as the Proton donor in the catalytic mechanism. The Mg(2+) site is built by Asp-244, Glu-287, and Asp-314. The (2R)-2-phosphoglycerate site is built by Lys-339, Arg-368, Ser-369, and Lys-390. Lys-339 (proton acceptor) is an active-site residue.

It belongs to the enolase family. As to quaternary structure, component of the RNA degradosome, a multiprotein complex involved in RNA processing and mRNA degradation. Mg(2+) serves as cofactor.

The protein resides in the cytoplasm. It is found in the secreted. The protein localises to the cell surface. It catalyses the reaction (2R)-2-phosphoglycerate = phosphoenolpyruvate + H2O. It functions in the pathway carbohydrate degradation; glycolysis; pyruvate from D-glyceraldehyde 3-phosphate: step 4/5. In terms of biological role, catalyzes the reversible conversion of 2-phosphoglycerate (2-PG) into phosphoenolpyruvate (PEP). It is essential for the degradation of carbohydrates via glycolysis. This chain is Enolase, found in Xylella fastidiosa (strain M23).